The chain runs to 130 residues: Follitropin subunit beta (130 aa).

Residues 1-20 (MMKSIQLCILLWCLRAVCCH) form the signal peptide. Disulfide bonds link cysteine 22-cysteine 70, cysteine 36-cysteine 85, cysteine 39-cysteine 123, cysteine 47-cysteine 101, cysteine 51-cysteine 103, and cysteine 106-cysteine 113. 2 N-linked (GlcNAc...) asparagine glycosylation sites follow: asparagine 26 and asparagine 43.

It belongs to the glycoprotein hormones subunit beta family. In terms of assembly, heterodimer. The active follitropin is a heterodimer composed of an alpha chain/CGA shared with other hormones and a unique beta chain/FSHB shown here.

The protein localises to the secreted. Functionally, together with the alpha chain CGA constitutes follitropin, the follicle-stimulating hormone, and provides its biological specificity to the hormone heterodimer. Binds FSHR, a G protein-coupled receptor, on target cells to activate downstream signaling pathways. Follitropin is involved in follicle development and spermatogenesis in reproductive organs. The chain is Follitropin subunit beta (Fshb) from Rattus norvegicus (Rat).